A 103-amino-acid chain; its full sequence is Small ribosomal subunit protein uS10 (103 aa).

It belongs to the universal ribosomal protein uS10 family. As to quaternary structure, part of the 30S ribosomal subunit.

Involved in the binding of tRNA to the ribosomes. This Shewanella baltica (strain OS223) protein is Small ribosomal subunit protein uS10.